Reading from the N-terminus, the 1012-residue chain is ATP-dependent DNA helicase MPH1 (1012 aa).

In terms of domain architecture, Helicase ATP-binding spans 94 to 261; sequence IVQKSLYQNT…EVVNNLNISN (168 aa). 107 to 114 provides a ligand contact to ATP; the sequence is IPTGMGKT. The short motif at 209-212 is the DEAH box element; that stretch reads DEAH. The 225-residue stretch at 430–654 folds into the Helicase C-terminal domain; that stretch reads KLQKIINELS…NFVEYKKSDR (225 aa). Residues 493–555 form a disordered region; sequence DEGFIRKNKP…AQISGMNQKQ (63 aa). Residues 498-510 show a composition bias toward basic residues; it reads RKNKPKGRKKADR. The span at 511–537 shows a compositional bias: basic and acidic residues; it reads LKRLEEDKQKQLSKAKQKEQEKVERSS.

Belongs to the DEAD box helicase family. DEAH subfamily. FANCM sub-subfamily. In terms of assembly, interacts with the MHF histone-fold complex to form the FANCM-MHF complex.

The protein localises to the nucleus. It catalyses the reaction ATP + H2O = ADP + phosphate + H(+). Functionally, ATP-dependent DNA helicase involved in DNA damage repair by homologous recombination and in genome maintenance. Capable of unwinding D-loops. Plays a role in limiting crossover recombinants during mitotic DNA double-strand break (DSB) repair. Component of a FANCM-MHF complex which promotes gene conversion at blocked replication forks, probably by reversal of the stalled fork. The polypeptide is ATP-dependent DNA helicase MPH1 (Vanderwaltozyma polyspora (strain ATCC 22028 / DSM 70294 / BCRC 21397 / CBS 2163 / NBRC 10782 / NRRL Y-8283 / UCD 57-17) (Kluyveromyces polysporus)).